A 370-amino-acid chain; its full sequence is Cytochrome b (370 aa).

The next 4 membrane-spanning stretches (helical) occupy residues 25–45 (FGSMLLACSTLQVLTGFFLAV), 69–90 (WLMQNLHAIGASMFFICIYIHI), 105–125 (WLSGTMLLIMLMATAFFGYVL), and 170–190 (FFALHFILPFGIISLSSLHVI). The heme b site is built by histidine 75 and histidine 89. Residues histidine 174 and histidine 188 each contribute to the heme b site. Histidine 193 provides a ligand contact to a ubiquinone. The next 4 membrane-spanning stretches (helical) occupy residues 218 to 238 (YKDLLMLTIMTILLLLIVSFS), 280 to 300 (LGGALALTMSIIILMTVPFTH), 312 to 332 (FMQMTFWMFAATFLVITWTAT), and 339 to 358 (FTLIGQMASMLYFLFFISNP).

It belongs to the cytochrome b family. In terms of assembly, the cytochrome bc1 complex contains 3 respiratory subunits (MT-CYB, CYC1 and UQCRFS1), 2 core proteins (UQCRC1 and UQCRC2) and probably 6 low-molecular weight proteins. It depends on heme b as a cofactor.

It localises to the mitochondrion inner membrane. Functionally, component of the ubiquinol-cytochrome c reductase complex (complex III or cytochrome b-c1 complex) that is part of the mitochondrial respiratory chain. The b-c1 complex mediates electron transfer from ubiquinol to cytochrome c. Contributes to the generation of a proton gradient across the mitochondrial membrane that is then used for ATP synthesis. The polypeptide is Cytochrome b (MT-CYB) (Eunectes murinus (Green anaconda)).